Reading from the N-terminus, the 117-residue chain is Large ribosomal subunit protein uL18 (117 aa).

This sequence belongs to the universal ribosomal protein uL18 family. In terms of assembly, part of the 50S ribosomal subunit; part of the 5S rRNA/L5/L18/L25 subcomplex. Contacts the 5S and 23S rRNAs.

This is one of the proteins that bind and probably mediate the attachment of the 5S RNA into the large ribosomal subunit, where it forms part of the central protuberance. This chain is Large ribosomal subunit protein uL18, found in Sodalis glossinidius (strain morsitans).